Reading from the N-terminus, the 83-residue chain is MSRLTIDMTDQQHQSLKALAALQGKTIKQYALERLFPGDADADQAWQELKTMLGNRINDGLAGKVSTKSVGEILDEELSGDRA.

As to quaternary structure, forms a homodimer in solution, interacts with ParD, possibly as a ParD(2)-ParE(2) heterotetramer, which neutralizes the toxic activity of ParE. Both the homodimer and heterotetramer bind DNA, although genetically only ParD is required for full operon repression. Another study has shown that it is a ParD homotetramer that binds the promoter.

Functionally, antitoxin component of a type II toxin-antitoxin (TA) system involved in plasmid partition. Inhibits the anti-DNA gyrase activity of toxin ParE; reverses and restores gyrase catalytic activity in vitro. The parDE operon alone is capable of stabilizing an RK2-derived minireplicon under defined growth conditions in several different Gram-negative bacteria. It does so by the post-segregational killing (PSK) of plasmid-free cells, also referred to as a plasmid addiction system. Binds its own promoter, autorepressing it; gentically only ParD is required for full autorepression. The polypeptide is Antitoxin ParD (parD) (Escherichia coli).